A 428-amino-acid chain; its full sequence is Sporulation kinase C (428 aa).

A run of 2 helical transmembrane segments spans residues isoleucine 8–isoleucine 28 and proline 36–isoleucine 56. Residues leucine 76–serine 147 enclose the PAS domain. The PAC domain occupies glycine 148–glutamate 200. The Histidine kinase domain maps to glycine 221–serine 426. Phosphohistidine; by autocatalysis is present on histidine 224.

As to quaternary structure, oligomerizes, probably forms homodimers; oligomerization is assisted by FloT. Interacts with FloT. Another study shows only rare colocalization with FloT or FloA membrane assemblies. KinC membrane assemblies are more mobile than FloT membrane assemblies.

The protein localises to the cell membrane. The protein resides in the membrane raft. It carries out the reaction ATP + protein L-histidine = ADP + protein N-phospho-L-histidine.. Phosphorylates the sporulation-regulatory protein Spo0A a transcription factor that also controls biofilm formation. Requires FloT and FloA for localization to DRMs and for activity. This Bacillus subtilis (strain 168) protein is Sporulation kinase C.